A 780-amino-acid chain; its full sequence is APC membrane recruitment protein 3 (780 aa).

A compositionally biased stretch (basic and acidic residues) spans 20–32 (KLIDSPAKEDPDK). Disordered stretches follow at residues 20-59 (KLID…QGYG), 341-407 (ELPL…FPRD), 547-569 (KGRE…AHSG), 582-617 (GEPA…TMTS), 635-659 (KELG…GSAL), 706-729 (KNPI…SPQD), and 749-780 (LGPQ…SVGS). Over residues 354–376 (SKASSIDTGTPKSEQPESVSTSD) the composition is skewed to polar residues. Residues 602-617 (QDFSEGQSSSEATMTS) are compositionally biased toward polar residues. Positions 753–763 (ACSSVDSQPQQ) are enriched in polar residues.

This sequence belongs to the Amer family.

It localises to the cell membrane. Regulator of the canonical Wnt signaling pathway. Acts by specifically binding phosphatidylinositol 4,5-bisphosphate (PtdIns(4,5)P2), translocating to the cell membrane. In Mus musculus (Mouse), this protein is APC membrane recruitment protein 3 (Amer3).